Consider the following 191-residue polypeptide: Ribonuclease HII (191 aa).

Residues Ile-7 to Lys-191 form the RNase H type-2 domain. A divalent metal cation is bound by residues Asp-13, Glu-14, and Asp-103.

It belongs to the RNase HII family. Mn(2+) serves as cofactor. The cofactor is Mg(2+).

It localises to the cytoplasm. The enzyme catalyses Endonucleolytic cleavage to 5'-phosphomonoester.. Its function is as follows. Endonuclease that specifically degrades the RNA of RNA-DNA hybrids. The protein is Ribonuclease HII of Legionella pneumophila (strain Corby).